The chain runs to 196 residues: Peptidyl-tRNA hydrolase (196 aa).

Residue Tyr-18 coordinates tRNA. The active-site Proton acceptor is the His-23. The tRNA site is built by Phe-69, Asn-71, and Asn-117.

This sequence belongs to the PTH family. In terms of assembly, monomer.

The protein localises to the cytoplasm. The catalysed reaction is an N-acyl-L-alpha-aminoacyl-tRNA + H2O = an N-acyl-L-amino acid + a tRNA + H(+). Its function is as follows. Hydrolyzes ribosome-free peptidyl-tRNAs (with 1 or more amino acids incorporated), which drop off the ribosome during protein synthesis, or as a result of ribosome stalling. In terms of biological role, catalyzes the release of premature peptidyl moieties from peptidyl-tRNA molecules trapped in stalled 50S ribosomal subunits, and thus maintains levels of free tRNAs and 50S ribosomes. The polypeptide is Peptidyl-tRNA hydrolase (Vibrio parahaemolyticus serotype O3:K6 (strain RIMD 2210633)).